We begin with the raw amino-acid sequence, 272 residues long: Putative pyruvate, phosphate dikinase regulatory protein (272 aa).

151-158 is an ADP binding site; that stretch reads GISRTSKT.

The protein belongs to the pyruvate, phosphate/water dikinase regulatory protein family. PDRP subfamily.

It carries out the reaction N(tele)-phospho-L-histidyl/L-threonyl-[pyruvate, phosphate dikinase] + ADP = N(tele)-phospho-L-histidyl/O-phospho-L-threonyl-[pyruvate, phosphate dikinase] + AMP + H(+). It catalyses the reaction N(tele)-phospho-L-histidyl/O-phospho-L-threonyl-[pyruvate, phosphate dikinase] + phosphate + H(+) = N(tele)-phospho-L-histidyl/L-threonyl-[pyruvate, phosphate dikinase] + diphosphate. Bifunctional serine/threonine kinase and phosphorylase involved in the regulation of the pyruvate, phosphate dikinase (PPDK) by catalyzing its phosphorylation/dephosphorylation. In Staphylococcus aureus (strain USA300), this protein is Putative pyruvate, phosphate dikinase regulatory protein.